The chain runs to 548 residues: ATP synthase subunit alpha (548 aa).

Position 172–179 (172–179) interacts with ATP; the sequence is GDRKTGKT. A disordered region spans residues 526–548; sequence AEAMDEADVEKESVKVRKPAPKK.

Belongs to the ATPase alpha/beta chains family. In terms of assembly, F-type ATPases have 2 components, CF(1) - the catalytic core - and CF(0) - the membrane proton channel. CF(1) has five subunits: alpha(3), beta(3), gamma(1), delta(1), epsilon(1). CF(0) has three main subunits: a(1), b(2) and c(9-12). The alpha and beta chains form an alternating ring which encloses part of the gamma chain. CF(1) is attached to CF(0) by a central stalk formed by the gamma and epsilon chains, while a peripheral stalk is formed by the delta and b chains.

It localises to the cell membrane. The catalysed reaction is ATP + H2O + 4 H(+)(in) = ADP + phosphate + 5 H(+)(out). Produces ATP from ADP in the presence of a proton gradient across the membrane. The alpha chain is a regulatory subunit. This is ATP synthase subunit alpha from Mycolicibacterium vanbaalenii (strain DSM 7251 / JCM 13017 / BCRC 16820 / KCTC 9966 / NRRL B-24157 / PYR-1) (Mycobacterium vanbaalenii).